The following is a 357-amino-acid chain: Phosphoribosylformylglycinamidine cyclo-ligase (357 aa).

Belongs to the AIR synthase family.

The protein localises to the cytoplasm. It carries out the reaction 2-formamido-N(1)-(5-O-phospho-beta-D-ribosyl)acetamidine + ATP = 5-amino-1-(5-phospho-beta-D-ribosyl)imidazole + ADP + phosphate + H(+). Its pathway is purine metabolism; IMP biosynthesis via de novo pathway; 5-amino-1-(5-phospho-D-ribosyl)imidazole from N(2)-formyl-N(1)-(5-phospho-D-ribosyl)glycinamide: step 2/2. In Rhizobium etli (strain ATCC 51251 / DSM 11541 / JCM 21823 / NBRC 15573 / CFN 42), this protein is Phosphoribosylformylglycinamidine cyclo-ligase.